A 183-amino-acid polypeptide reads, in one-letter code: MEDDSLYLGGEWQFNHFSKLTSSRPDAAFAEIQRTSLPEKSPLSCETRVDLCDDLAPVARQLAPREKLPLSSRRPAAVGAGLQNMGNTCYVNASLQCLTYTPPLANYMLSREHSQTCHRHKGCMLCTMQAHITRALHNPGHVIQPSQALAAGFHRGKQEDAHEFLMFTVDAMEKACLPGHKQV.

The 104-residue stretch at 80-183 (AGLQNMGNTC…KACLPGHKQV (104 aa)) folds into the USP domain.

Belongs to the peptidase C19 family. USP17 subfamily.

It localises to the nucleus. The protein resides in the endoplasmic reticulum. This Homo sapiens (Human) protein is Ubiquitin carboxyl-terminal hydrolase 17-like protein 23 (USP17L23).